The chain runs to 926 residues: Serine/threonine-protein kinase SIK2 (926 aa).

The Protein kinase domain occupies 20–271; the sequence is YDIEGTLGKG…IAQIKEHKWM (252 aa). Thr25 carries the post-translational modification Phosphothreonine. Residues 26–34 and Lys49 each bind ATP; that span reads LGKGNFAVV. Lys53 bears the N6-acetyllysine; by EP300 mark. Residue Asp142 is the Proton acceptor of the active site. The residue at position 175 (Thr175) is a Phosphothreonine; by LKB1. The 41-residue stretch at 295–335 folds into the UBA domain; the sequence is EFNEQVLRLMHSLGIDQQKTIESLQNKSYNHFAAIYFLLVE. Thr484 carries the phosphothreonine modification. Phosphoserine occurs at positions 534 and 587. 2 stretches are compositionally biased toward low complexity: residues 644–659 and 742–756; these read SSCP…ESVS and SSYP…LPRQ. Disordered stretches follow at residues 644 to 666, 742 to 776, and 801 to 896; these read SSCP…ASVH, SSYP…PLSP, and PLPS…SSYD. Residues 765–774 show a composition bias toward polar residues; the sequence is APPFSLTQPL. Pro residues predominate over residues 822-834; the sequence is QPPPPPPPPPPRQ.

The protein belongs to the protein kinase superfamily. CAMK Ser/Thr protein kinase family. SNF1 subfamily. In terms of assembly, interacts with and phosphorylates TORC2/CRTC2. Mg(2+) serves as cofactor. Post-translationally, phosphorylated at Thr-175 by STK11/LKB1 in complex with STE20-related adapter-alpha (STRADA) pseudo kinase and CAB39. Phosphorylated at Thr-484 in response to insulin in adipocytes. In terms of processing, acetylation at Lys-53 inhibits kinase activity. Deacetylated by HDAC6.

It localises to the cytoplasm. The protein resides in the endoplasmic reticulum membrane. It catalyses the reaction L-seryl-[protein] + ATP = O-phospho-L-seryl-[protein] + ADP + H(+). It carries out the reaction L-threonyl-[protein] + ATP = O-phospho-L-threonyl-[protein] + ADP + H(+). Activated by phosphorylation on Thr-175. Serine/threonine-protein kinase that plays a role in many biological processes such as fatty acid oxidation, autophagy, immune response or glucose metabolism. Phosphorylates 'Ser-794' of IRS1 in insulin-stimulated adipocytes, potentially modulating the efficiency of insulin signal transduction. Inhibits CREB activity by phosphorylating and repressing TORCs, the CREB-specific coactivators. Phosphorylates EP300 and thus inhibits its histone acetyltransferase activity. In turn, regulates the DNA-binding ability of several transcription factors such as PPARA or MLXIPL. Also plays a role in thymic T-cell development. This Homo sapiens (Human) protein is Serine/threonine-protein kinase SIK2 (SIK2).